We begin with the raw amino-acid sequence, 103 residues long: MYAVVKTGGKQYRVAVGEKLKVEQIPADIDSQIVLEEVLMVAGGDEVKVGTPLVAGATVKATVVSHGRGEKVRIFKMRRRKHYQKHQGHRQNYTEIRIDEISL.

Belongs to the bacterial ribosomal protein bL21 family. Part of the 50S ribosomal subunit. Contacts protein L20.

This protein binds to 23S rRNA in the presence of protein L20. The chain is Large ribosomal subunit protein bL21 from Laribacter hongkongensis (strain HLHK9).